The sequence spans 429 residues: MQNYIKSEKAFKEAKKVLPGGVNSPVRAFNSVDASPVFMDHGKGAYITDVDGNEYIDYVLSWGPLILGHADPSVVNAITNSAMKGTSFGTPTEIETELAKLVIERVPSIEIVRMVSSGTEATMSAIRLARGYTKREKILKFEGSYHGHGDSLLIKAGSGVATLGLPDSPGVTKGLAADTITVPYNDVEGAKLAFEKFGEEIAAVIVEPVAGNMGVVPPIDGFLEGLRELTTEYGALLIFDEVMTGFRVDYYSAQGYYVVTPDITCLGKVIGGGLPVGAYGGKKEIMEQIAPAGSIYQAGTLSGNPLAMNAGFETVRQLTPQHYDVFRSLIKRMEEGLTEISNRHEVPLSINKAGSMFGFFFTDQKVTNFDTAKTSDLEFFRNYYREMLAQGIFLPPSQFEGVFISTMHTEKEIDATLEAFDVTCKMLRG.

Residue K268 is modified to N6-(pyridoxal phosphate)lysine.

It belongs to the class-III pyridoxal-phosphate-dependent aminotransferase family. HemL subfamily. Homodimer. Requires pyridoxal 5'-phosphate as cofactor.

It is found in the cytoplasm. It catalyses the reaction (S)-4-amino-5-oxopentanoate = 5-aminolevulinate. It participates in porphyrin-containing compound metabolism; protoporphyrin-IX biosynthesis; 5-aminolevulinate from L-glutamyl-tRNA(Glu): step 2/2. This is Glutamate-1-semialdehyde 2,1-aminomutase 1 from Listeria innocua serovar 6a (strain ATCC BAA-680 / CLIP 11262).